Consider the following 379-residue polypeptide: Alcohol dehydrogenase 2 (379 aa).

Zn(2+) contacts are provided by Cys-47, Thr-49, His-69, Cys-99, Cys-102, Cys-105, Cys-113, and Cys-177. 2 residues coordinate an alcohol: Thr-49 and His-69. NAD(+) is bound at residue Thr-49. NAD(+)-binding positions include 202 to 207, Asp-226, Lys-231, Thr-272, Val-295, 295 to 297, Phe-322, and Arg-372; these read GLGAVG and VGV.

It belongs to the zinc-containing alcohol dehydrogenase family. Homodimer. The cofactor is Zn(2+).

The protein resides in the cytoplasm. It catalyses the reaction a primary alcohol + NAD(+) = an aldehyde + NADH + H(+). The enzyme catalyses a secondary alcohol + NAD(+) = a ketone + NADH + H(+). In Zea mays (Maize), this protein is Alcohol dehydrogenase 2 (ADH2).